We begin with the raw amino-acid sequence, 620 residues long: Cryptochrome-1 (620 aa).

One can recognise a Photolyase/cryptochrome alpha/beta domain in the interval 3 to 132; it reads VNAVHWFRKG…EVIVRISHTL (130 aa). Short sequence motifs (LIR) lie at residues 50-54, 82-87, and 151-156; these read NRWRF, DVFPRL, and KRFQTL. Residue serine 252 participates in FAD binding. Short sequence motifs (LIR) lie at residues 255 to 260, 271 to 276, 285 to 290, and 335 to 339; these read LRFGCL, DLYKKV, SLYGQL, and TGFPW. An FAD-binding site is contributed by glutamine 289. Histidine 355 is an FAD binding site. Positions 379–384 match the LIR 8 motif; that stretch reads KVFEEL. 387–389 serves as a coordination point for FAD; it reads DAD. Short sequence motifs (LIR) lie at residues 395 to 400, 411 to 416, 430 to 435, 486 to 491, and 492 to 497; these read GSWMWL, HCYCPV, RRYLPV, QIYQQL, and SRYRGL. A disordered region spans residues 593-620; that stretch reads TGISAGKRPNPEEETQSVGPKVQRQSTN.

Belongs to the DNA photolyase class-1 family. As to quaternary structure, component of the circadian core oscillator, which includes the CRY proteins, CLOCK or NPAS2, BMAL1 or BMAL2, CSNK1E, and the PER proteins. Requires FAD as cofactor. (6R)-5,10-methylene-5,6,7,8-tetrahydrofolate serves as cofactor. As to expression, expressed in the retina.

It is found in the cytoplasm. The protein resides in the nucleus. Functionally, transcriptional repressor which forms a core component of the circadian clock. The circadian clock, an internal time-keeping system, regulates various physiological processes through the generation of approximately 24 hour circadian rhythms in gene expression, which are translated into rhythms in metabolism and behavior. It is derived from the Latin roots 'circa' (about) and 'diem' (day) and acts as an important regulator of a wide array of physiological functions including metabolism, sleep, body temperature, blood pressure, endocrine, immune, cardiovascular, and renal function. Consists of two major components: the central clock, residing in the suprachiasmatic nucleus (SCN) of the brain, and the peripheral clocks that are present in nearly every tissue and organ system. Both the central and peripheral clocks can be reset by environmental cues, also known as Zeitgebers (German for 'timegivers'). The predominant Zeitgeber for the central clock is light, which is sensed by retina and signals directly to the SCN. The central clock entrains the peripheral clocks through neuronal and hormonal signals, body temperature and feeding-related cues, aligning all clocks with the external light/dark cycle. Circadian rhythms allow an organism to achieve temporal homeostasis with its environment at the molecular level by regulating gene expression to create a peak of protein expression once every 24 hours to control when a particular physiological process is most active with respect to the solar day. Transcription and translation of core clock components (CLOCK, NPAS2, BMAL1, BMAL2, PER1, PER2, PER3, CRY1 and CRY2) plays a critical role in rhythm generation, whereas delays imposed by post-translational modifications (PTMs) are important for determining the period (tau) of the rhythms (tau refers to the period of a rhythm and is the length, in time, of one complete cycle). A diurnal rhythm is synchronized with the day/night cycle, while the ultradian and infradian rhythms have a period shorter and longer than 24 hours, respectively. Disruptions in the circadian rhythms contribute to the pathology of cardiovascular diseases, cancer, metabolic syndromes and aging. A transcription/translation feedback loop (TTFL) forms the core of the molecular circadian clock mechanism. Transcription factors, CLOCK or NPAS2 and BMAL1 or BMAL2, form the positive limb of the feedback loop, act in the form of a heterodimer and activate the transcription of core clock genes and clock-controlled genes (involved in key metabolic processes), harboring E-box elements (5'-CACGTG-3') within their promoters. The core clock genes: PER1/2/3 and CRY1/2 which are transcriptional repressors form the negative limb of the feedback loop and interact with the CLOCK|NPAS2-BMAL1|BMAL2 heterodimer inhibiting its activity and thereby negatively regulating their own expression. This heterodimer also activates nuclear receptors NR1D1/2 and RORA/B/G, which form a second feedback loop and which activate and repress BMAL1 transcription, respectively. CRY1 and CRY2 have redundant functions but also differential and selective contributions at least in defining the pace of the SCN circadian clock and its circadian transcriptional outputs. More potent transcriptional repressor in cerebellum and liver than CRY2, though more effective in lengthening the period of the SCN oscillator. On its side, CRY2 seems to play a critical role in tuning SCN circadian period by opposing the action of CRY1. With CRY2, is dispensable for circadian rhythm generation but necessary for the development of intercellular networks for rhythm synchrony. Capable of translocating circadian clock core proteins such as PER proteins to the nucleus. Interacts with CLOCK-BMAL1 independently of PER proteins and is found at CLOCK-BMAL1-bound sites, suggesting that CRY may act as a molecular gatekeeper to maintain CLOCK-BMAL1 in a poised and repressed state until the proper time for transcriptional activation. In Erithacus rubecula (European robin), this protein is Cryptochrome-1 (CRY1).